The sequence spans 40 residues: Photosystem II reaction center protein J (40 aa).

The chain crosses the membrane as a helical span at residues 8–28; the sequence is IPLWLIGTLTGILVIGLIGIF.

This sequence belongs to the PsbJ family. PSII is composed of 1 copy each of membrane proteins PsbA, PsbB, PsbC, PsbD, PsbE, PsbF, PsbH, PsbI, PsbJ, PsbK, PsbL, PsbM, PsbT, PsbX, PsbY, PsbZ, Psb30/Ycf12, at least 3 peripheral proteins of the oxygen-evolving complex and a large number of cofactors. It forms dimeric complexes.

It localises to the plastid. It is found in the chloroplast thylakoid membrane. Its function is as follows. One of the components of the core complex of photosystem II (PSII). PSII is a light-driven water:plastoquinone oxidoreductase that uses light energy to abstract electrons from H(2)O, generating O(2) and a proton gradient subsequently used for ATP formation. It consists of a core antenna complex that captures photons, and an electron transfer chain that converts photonic excitation into a charge separation. The protein is Photosystem II reaction center protein J of Phalaenopsis aphrodite subsp. formosana (Moth orchid).